A 314-amino-acid polypeptide reads, in one-letter code: NADH-ubiquinone oxidoreductase chain 2 (314 aa).

9 helical membrane-spanning segments follow: residues 13–35 (LGVM…VWLG), 61–80 (YFVV…VSLM), 85–107 (VSGL…LHSW), 117–139 (WLAS…SMIL), 144–166 (LWVV…NSVR), 189–209 (VVFV…FYGC), 224–244 (AASG…GFLA), 246–266 (VLVF…GSVI), and 294–314 (IWSL…VSFI).

Belongs to the complex I subunit 2 family.

The protein resides in the mitochondrion inner membrane. It catalyses the reaction a ubiquinone + NADH + 5 H(+)(in) = a ubiquinol + NAD(+) + 4 H(+)(out). Its function is as follows. Core subunit of the mitochondrial membrane respiratory chain NADH dehydrogenase (Complex I) that is believed to belong to the minimal assembly required for catalysis. Complex I functions in the transfer of electrons from NADH to the respiratory chain. The immediate electron acceptor for the enzyme is believed to be ubiquinone. The chain is NADH-ubiquinone oxidoreductase chain 2 (ND2) from Mytilus edulis (Blue mussel).